The sequence spans 100 residues: MRLSPHEQERLLLSYAAELARRRQARGLKLNHPEAVALITDHVLEGARDGRSVAELMASGRTVLTRDDVMTGVPEMIHDVQVEATFPDGTKLVTVHQPIA.

The protein belongs to the urease gamma subunit family. As to quaternary structure, heterotrimer of UreA (gamma), UreB (beta) and UreC (alpha) subunits. Three heterotrimers associate to form the active enzyme.

Its subcellular location is the cytoplasm. It catalyses the reaction urea + 2 H2O + H(+) = hydrogencarbonate + 2 NH4(+). It functions in the pathway nitrogen metabolism; urea degradation; CO(2) and NH(3) from urea (urease route): step 1/1. This is Urease subunit gamma from Nocardia farcinica (strain IFM 10152).